A 582-amino-acid polypeptide reads, in one-letter code: Insulin-like growth factor 2 mRNA-binding protein 3 (582 aa).

RRM domains lie at 2–75 and 81–156; these read NKLY…HSVP and CKLQ…YIPD. Residues 164–190 are disordered; it reads PAVGGRRGFNPRGPPRQGSPSLGARPK. The residue at position 182 (S182) is a Phosphoserine. KH domains lie at 194 to 259, 275 to 342, 408 to 473, and 490 to 556; these read DVPL…CRNI, EIPL…EEEI, SETV…QGRI, and KLEA…QRKI. The interval 562 to 582 is disordered; the sequence is QVRRQQQPKPSAAGPPVARRK.

The protein belongs to the RRM IMP/VICKZ family. In terms of assembly, homodimer and multimer.

The protein localises to the cytoplasm. It is found in the nucleus. It localises to the P-body. Its subcellular location is the stress granule. In terms of biological role, RNA-binding factor that may recruit target transcripts to cytoplasmic protein-RNA complexes (mRNPs). This transcript 'caging' into mRNPs allows mRNA transport and transient storage. It also modulates the rate and location at which target transcripts encounter the translational apparatus and shields them from endonuclease attacks or microRNA-mediated degradation. Preferentially binds to N6-methyladenosine (m6A)-containing mRNAs and increases their stability. Involved in neuronal crest migration. The polypeptide is Insulin-like growth factor 2 mRNA-binding protein 3 (igf2bp3) (Danio rerio (Zebrafish)).